The primary structure comprises 229 residues: Prolactin (229 aa).

The signal sequence occupies residues 1–30; it reads MDSKGSAQKGSRLLLLLVVSNLLLCQGVVS. Cys34 and Cys41 form a disulfide bridge. Position 56 is a phosphoserine (Ser56). N-linked (GlcNAc...) asparagine; partial glycosylation occurs at Asn61. A phosphoserine mark is found at Ser64 and Ser120. Intrachain disulfides connect Cys88-Cys204 and Cys221-Cys229.

It belongs to the somatotropin/prolactin family. As to quaternary structure, interacts with PRLR.

It is found in the secreted. Functionally, prolactin acts primarily on the mammary gland by promoting lactation, mammogenesis, mitogenesis and osmoregulation. This chain is Prolactin (PRL), found in Ovis aries (Sheep).